The primary structure comprises 366 residues: Chorismate synthase (366 aa).

R48 is an NADP(+) binding site. FMN contacts are provided by residues 125–127 (RSS), 238–239 (NA), G278, 293–297 (KPTSS), and R319.

Belongs to the chorismate synthase family. As to quaternary structure, homotetramer. The cofactor is FMNH2.

The enzyme catalyses 5-O-(1-carboxyvinyl)-3-phosphoshikimate = chorismate + phosphate. Its pathway is metabolic intermediate biosynthesis; chorismate biosynthesis; chorismate from D-erythrose 4-phosphate and phosphoenolpyruvate: step 7/7. Catalyzes the anti-1,4-elimination of the C-3 phosphate and the C-6 proR hydrogen from 5-enolpyruvylshikimate-3-phosphate (EPSP) to yield chorismate, which is the branch point compound that serves as the starting substrate for the three terminal pathways of aromatic amino acid biosynthesis. This reaction introduces a second double bond into the aromatic ring system. This chain is Chorismate synthase, found in Hydrogenovibrio crunogenus (strain DSM 25203 / XCL-2) (Thiomicrospira crunogena).